Consider the following 372-residue polypeptide: Saccharopine dehydrogenase [NAD(+), L-lysine-forming] (372 aa).

Residues R18 and K77 each contribute to the L-saccharopine site. The Proton acceptor role is filled by K77. H95 functions as the Proton donor in the catalytic mechanism. Q100 contributes to the L-saccharopine binding site. Residue R129 coordinates NAD(+). L-saccharopine-binding residues include R130 and F134. Residues G200 to R201, D224, T228, Y248, and V275 each bind NAD(+). A disulfide bond links C202 and C246. Residue S276 to D278 participates in L-saccharopine binding. Position 316 to 319 (I316 to L319) interacts with NAD(+).

The protein belongs to the AlaDH/PNT family. In terms of assembly, monomer.

It catalyses the reaction L-saccharopine + NAD(+) + H2O = L-lysine + 2-oxoglutarate + NADH + H(+). Its pathway is amino-acid biosynthesis; L-lysine biosynthesis via AAA pathway; L-lysine from L-alpha-aminoadipate (fungal route): step 3/3. In terms of biological role, catalyzes the NAD(+)-dependent cleavage of saccharopine to L-lysine and 2-oxoglutarate, the final step in the alpha-aminoadipate (AAA) pathway for lysin biosynthesis. This Neurospora crassa (strain ATCC 24698 / 74-OR23-1A / CBS 708.71 / DSM 1257 / FGSC 987) protein is Saccharopine dehydrogenase [NAD(+), L-lysine-forming] (lys-4).